The chain runs to 275 residues: 2'-N-acetylparomamine deacetylase (275 aa).

The Zn(2+) site is built by histidine 14, aspartate 17, and histidine 166.

It belongs to the PIGL family. The cofactor is Zn(2+).

It carries out the reaction 2'-N-acetylparomamine + H2O = paromamine + acetate. It functions in the pathway antibiotic biosynthesis; butirosin biosynthesis. Its function is as follows. Deacetylase involved in the biosynthesis of butirosin by mediating deacetylation of 2'-N-acetylparomamine. In Niallia circulans (Bacillus circulans), this protein is 2'-N-acetylparomamine deacetylase (btrD).